The sequence spans 94 residues: Co-chaperonin GroES (94 aa).

This sequence belongs to the GroES chaperonin family. Heptamer of 7 subunits arranged in a ring. Interacts with the chaperonin GroEL.

Its subcellular location is the cytoplasm. Its function is as follows. Together with the chaperonin GroEL, plays an essential role in assisting protein folding. The GroEL-GroES system forms a nano-cage that allows encapsulation of the non-native substrate proteins and provides a physical environment optimized to promote and accelerate protein folding. GroES binds to the apical surface of the GroEL ring, thereby capping the opening of the GroEL channel. This Streptococcus pneumoniae (strain Hungary19A-6) protein is Co-chaperonin GroES.